Consider the following 336-residue polypeptide: Cellodextrinase A (336 aa).

The active-site Proton donor is Glu-141.

It belongs to the glycosyl hydrolase 5 (cellulase A) family.

The protein localises to the secreted. In terms of biological role, crystalline cellulose degradation. The protein is Cellodextrinase A (celA) of Ruminococcus flavefaciens.